The chain runs to 271 residues: Putative phosphoenolpyruvate synthase regulatory protein (271 aa).

151–158 (GVSRSGKT) serves as a coordination point for ADP.

The protein belongs to the pyruvate, phosphate/water dikinase regulatory protein family. PSRP subfamily.

It catalyses the reaction [pyruvate, water dikinase] + ADP = [pyruvate, water dikinase]-phosphate + AMP + H(+). The catalysed reaction is [pyruvate, water dikinase]-phosphate + phosphate + H(+) = [pyruvate, water dikinase] + diphosphate. Functionally, bifunctional serine/threonine kinase and phosphorylase involved in the regulation of the phosphoenolpyruvate synthase (PEPS) by catalyzing its phosphorylation/dephosphorylation. The sequence is that of Putative phosphoenolpyruvate synthase regulatory protein from Burkholderia lata (strain ATCC 17760 / DSM 23089 / LMG 22485 / NCIMB 9086 / R18194 / 383).